Reading from the N-terminus, the 361-residue chain is POU domain, class 3, transcription factor 4 (361 aa).

2 disordered regions span residues 99–131 and 144–192; these read PHVA…GQPL and MLEH…PTSD. The segment covering 119 to 131 has biased composition (polar residues); sequence APNSSITNSGQPL. The segment covering 165–183 has biased composition (basic and acidic residues); the sequence is VLREPPDHGELGSHHCQDH. The region spanning 186 to 260 is the POU-specific domain; it reads EETPTSDELE…LLNKWLEEAD (75 aa). Serine 265 bears the Phosphoserine mark. The homeobox DNA-binding region spans 278–337; it reads KRKKRTSIEVSVKGVLETHFLKCPKPAAQEISSLADSLQLEKEVVRVWFCNRRQKEKRMT. The tract at residues 334 to 361 is disordered; that stretch reads KRMTPPGDQQPHEVYSHTVKTDASCHDL. Over residues 343–361 the composition is skewed to basic and acidic residues; the sequence is QPHEVYSHTVKTDASCHDL.

Belongs to the POU transcription factor family. Class-3 subfamily.

The protein resides in the nucleus. Its function is as follows. Probable transcription factor which exert its primary action widely during early neural development and in a very limited set of neurons in the mature brain. The chain is POU domain, class 3, transcription factor 4 (Pou3f4) from Mesocricetus auratus (Golden hamster).